Consider the following 303-residue polypeptide: tRNA pseudouridine synthase B (303 aa).

Asp47 (nucleophile) is an active-site residue.

Belongs to the pseudouridine synthase TruB family. Type 1 subfamily.

The enzyme catalyses uridine(55) in tRNA = pseudouridine(55) in tRNA. Responsible for synthesis of pseudouridine from uracil-55 in the psi GC loop of transfer RNAs. This Legionella pneumophila subsp. pneumophila (strain Philadelphia 1 / ATCC 33152 / DSM 7513) protein is tRNA pseudouridine synthase B.